A 380-amino-acid polypeptide reads, in one-letter code: Erythronate-4-phosphate dehydrogenase (380 aa).

Substrate-binding residues include Ser-45 and Thr-66. Residues 126–127 (QV), Asp-146, Thr-175, 206–208 (ASR), and Asp-232 contribute to the NAD(+) site. The active site involves Arg-208. The active site involves Glu-237. His-254 functions as the Proton donor in the catalytic mechanism. Gly-257 provides a ligand contact to NAD(+). Tyr-258 provides a ligand contact to substrate.

The protein belongs to the D-isomer specific 2-hydroxyacid dehydrogenase family. PdxB subfamily. As to quaternary structure, homodimer.

The protein localises to the cytoplasm. The catalysed reaction is 4-phospho-D-erythronate + NAD(+) = (R)-3-hydroxy-2-oxo-4-phosphooxybutanoate + NADH + H(+). It functions in the pathway cofactor biosynthesis; pyridoxine 5'-phosphate biosynthesis; pyridoxine 5'-phosphate from D-erythrose 4-phosphate: step 2/5. Its function is as follows. Catalyzes the oxidation of erythronate-4-phosphate to 3-hydroxy-2-oxo-4-phosphonooxybutanoate. This Pseudomonas paraeruginosa (strain DSM 24068 / PA7) (Pseudomonas aeruginosa (strain PA7)) protein is Erythronate-4-phosphate dehydrogenase.